A 346-amino-acid polypeptide reads, in one-letter code: Phenylalanine--tRNA ligase alpha subunit (346 aa).

A Mg(2+)-binding site is contributed by glutamate 262.

This sequence belongs to the class-II aminoacyl-tRNA synthetase family. Phe-tRNA synthetase alpha subunit type 1 subfamily. In terms of assembly, tetramer of two alpha and two beta subunits. It depends on Mg(2+) as a cofactor.

It is found in the cytoplasm. It carries out the reaction tRNA(Phe) + L-phenylalanine + ATP = L-phenylalanyl-tRNA(Phe) + AMP + diphosphate + H(+). In Ehrlichia chaffeensis (strain ATCC CRL-10679 / Arkansas), this protein is Phenylalanine--tRNA ligase alpha subunit.